We begin with the raw amino-acid sequence, 124 residues long: Small ribosomal subunit protein uS13 (124 aa).

The tract at residues 94-124 (GLPLRGQRTKNNSRTRKGKRKTVANKKKATK) is disordered. Basic residues predominate over residues 100–124 (QRTKNNSRTRKGKRKTVANKKKATK).

This sequence belongs to the universal ribosomal protein uS13 family. In terms of assembly, part of the 30S ribosomal subunit. Forms a loose heterodimer with protein S19. Forms two bridges to the 50S subunit in the 70S ribosome.

Located at the top of the head of the 30S subunit, it contacts several helices of the 16S rRNA. In the 70S ribosome it contacts the 23S rRNA (bridge B1a) and protein L5 of the 50S subunit (bridge B1b), connecting the 2 subunits; these bridges are implicated in subunit movement. Contacts the tRNAs in the A and P-sites. The sequence is that of Small ribosomal subunit protein uS13 from Flavobacterium johnsoniae (strain ATCC 17061 / DSM 2064 / JCM 8514 / BCRC 14874 / CCUG 350202 / NBRC 14942 / NCIMB 11054 / UW101) (Cytophaga johnsonae).